We begin with the raw amino-acid sequence, 3147 residues long: Bassianolide nonribosomal cyclodepsipeptide synthetase (3147 aa).

Positions 1–12 (MEPPNNANTGQL) are enriched in polar residues. The disordered stretch occupies residues 1–23 (MEPPNNANTGQLGPTLPNGTVDL). Residues 69–454 (HVVYEIPEDV…INKLQSTDGS (386 aa)) are condensation 1. Residues 495–887 (DDTPNKPAVC…GRMDSQVKIR (393 aa)) form an adenylation 1 region. The 77-residue stretch at 1015-1091 (PDASAGVTKL…SLQAAIGGSS (77 aa)) folds into the Carrier 1 domain. O-(pantetheine 4'-phosphoryl)serine is present on S1052. Residues 1109-1538 (SYSQGRLWFL…QTLISVVPLT (430 aa)) are condensation 2. Positions 1567-1973 (FATQVASYPD…GRMDFQFKIR (407 aa)) are adenylation 2. The interval 2041–2181 (TYTELDTVSS…FPTRDYLEQV (141 aa)) is S-adenosyl-L-methionine-dependent N-methyltransferase (MT). 2 consecutive Carrier domains span residues 2515 to 2589 (FPLS…RQQL) and 2615 to 2689 (APTT…EVSQ). O-(pantetheine 4'-phosphoryl)serine is present on residues S2549 and S2649. Residues 2735 to 3139 (QDVYLATHLQ…THLMEQVCNT (405 aa)) are condensation 3.

It belongs to the NRP synthetase family.

Its function is as follows. Bassianolide nonribosomal synthetase that mediates the biosynthesis of bassianolide (BSL), a non-ribosomal cyclodepsipeptide that shows insecticidal and cancer cell antiproliferative activity. BSLS first catalyzes the iterative synthesis of an enzyme-bound dipeptidol monomer intermediate from D-2-hydroxyisovalerate and L-leucine before performing the condensation and cyclization of 4 dipeptidol monomers to yield the cyclic tetrameric ester bassianolide. The N-methyltransferase MT domain is responsible for the methylation of the leucine residues of bassianolide. BSLS is flexible with both the amino acid and hydroxyl acid precursors, and produces bassianolide as the major product (containing N-methyl-L-Leu), together with small amounts of beauvericin and its analogs beauvericins A-C (containing N-methyl-L-Phe). The protein is Bassianolide nonribosomal cyclodepsipeptide synthetase of Beauveria bassiana (strain ARSEF 2860) (White muscardine disease fungus).